The primary structure comprises 437 residues: Probable E3 ubiquitin-protein ligase TRIML2 (437 aa).

The B box-type zinc finger occupies threonine 14–isoleucine 55. Residues cysteine 19, histidine 22, cysteine 41, and histidine 47 each contribute to the Zn(2+) site. Positions isoleucine 55–glutamate 200 form a coiled coil. One can recognise a B30.2/SPRY domain in the interval aspartate 231–proline 429.

The enzyme catalyses S-ubiquitinyl-[E2 ubiquitin-conjugating enzyme]-L-cysteine + [acceptor protein]-L-lysine = [E2 ubiquitin-conjugating enzyme]-L-cysteine + N(6)-ubiquitinyl-[acceptor protein]-L-lysine.. Its pathway is protein modification; protein ubiquitination. The polypeptide is Probable E3 ubiquitin-protein ligase TRIML2 (Homo sapiens (Human)).